Consider the following 383-residue polypeptide: Putative F-box/kelch-repeat protein At1g62270 (383 aa).

In terms of domain architecture, F-box spans 6-51; the sequence is TSSFSSLPWDLVEDILARVPATSLKRLRSTCKQWNFLFNDQIFTKM. 3 Kelch repeats span residues 110–158, 160–211, and 349–383; these read KVFH…YGNY, SCYN…LRGN, and TVYIIGENEYWRKEDIVQRSYRPRMFSYVPSLVQI.

The protein is Putative F-box/kelch-repeat protein At1g62270 of Arabidopsis thaliana (Mouse-ear cress).